A 506-amino-acid polypeptide reads, in one-letter code: MEKVREIVREGRRVAKEDPRRVVHSFKVGLVLALVSSFYYYQPLYDSFGVNAMWAVMTVVVVFEFSVGATLGKGLNRVAATLFAGGLGIGAHHLASMSGPTGEPILLAVFVFVQAALSTFVRFFPRVKARYDYSLLIFILTFALISVSGFREEQVVKLTHKRISTVIIGGLSCVIISIFVCPVWAGQDLHSLIASNFEKLSFFLLGNSFHYVSSDLNSITLLRKIKSWRLADFGDKYCEVVENDGAKEVDKRKKDFDNYKSVLNSKSNEESLANFAKWEPGHGQFRFRHPWKQYLAVGELIRQCAYRIHALNSYLNADNQVSVDIKKKLGEPLRRMSLESGKAMKEMSISLKKMTKPSSSDLHVQNAKSACKSLTNLLNSGILKEVEPLELVSLLTAISLLIDIINLTEKILESLHELATAAKFKNKIEHPLFSEKPKAKSFVSVRSIKCHDDHVVIIIEDDGNNDDTSKNDNGSKEVSIHEKHEDDDTHVDARCVSCGHTSVCVK.

6 helical membrane passes run 28-48 (VGLV…YDSF), 52-72 (AMWA…ATLG), 78-98 (VAAT…ASMS), 104-124 (PILL…VRFF), 130-150 (RYDY…VSGF), and 166-186 (VIIG…VWAG). Positions 461-485 (DDGNNDDTSKNDNGSKEVSIHEKHE) are disordered. Basic and acidic residues predominate over residues 467–485 (DTSKNDNGSKEVSIHEKHE).

This sequence belongs to the aromatic acid exporter (TC 2.A.85) family.

Its subcellular location is the membrane. Its function is as follows. Malate transporter. The sequence is that of Aluminum-activated malate transporter 7 (ALMT7) from Arabidopsis thaliana (Mouse-ear cress).